The primary structure comprises 65 residues: DNA gyrase inhibitor YacG (65 aa).

The Zn(2+) site is built by Cys-9, Cys-12, Cys-28, and Cys-32. A disordered region spans residues 45 to 65; it reads KRIPSSGDLSESDDWSEEPKQ. Residues 54–65 show a composition bias toward acidic residues; it reads SESDDWSEEPKQ.

This sequence belongs to the DNA gyrase inhibitor YacG family. Interacts with GyrB. The cofactor is Zn(2+).

Its function is as follows. Inhibits all the catalytic activities of DNA gyrase by preventing its interaction with DNA. Acts by binding directly to the C-terminal domain of GyrB, which probably disrupts DNA binding by the gyrase. The sequence is that of DNA gyrase inhibitor YacG from Shigella boydii serotype 18 (strain CDC 3083-94 / BS512).